Consider the following 483-residue polypeptide: tRNA sulfurtransferase (483 aa).

A THUMP domain is found at 63–167 (GQLIDMLART…DDQVYLVTKK (105 aa)). ATP-binding positions include 185-186 (LI), lysine 267, glycine 289, and glutamine 298. A disulfide bridge links cysteine 346 with cysteine 457. A Rhodanese domain is found at 405-483 (LPVSAKVIDI…GYTNVGVYRP (79 aa)). Cysteine 457 serves as the catalytic Cysteine persulfide intermediate.

The protein belongs to the ThiI family.

The protein resides in the cytoplasm. The enzyme catalyses [ThiI sulfur-carrier protein]-S-sulfanyl-L-cysteine + a uridine in tRNA + 2 reduced [2Fe-2S]-[ferredoxin] + ATP + H(+) = [ThiI sulfur-carrier protein]-L-cysteine + a 4-thiouridine in tRNA + 2 oxidized [2Fe-2S]-[ferredoxin] + AMP + diphosphate. It catalyses the reaction [ThiS sulfur-carrier protein]-C-terminal Gly-Gly-AMP + S-sulfanyl-L-cysteinyl-[cysteine desulfurase] + AH2 = [ThiS sulfur-carrier protein]-C-terminal-Gly-aminoethanethioate + L-cysteinyl-[cysteine desulfurase] + A + AMP + 2 H(+). The protein operates within cofactor biosynthesis; thiamine diphosphate biosynthesis. In terms of biological role, catalyzes the ATP-dependent transfer of a sulfur to tRNA to produce 4-thiouridine in position 8 of tRNAs, which functions as a near-UV photosensor. Also catalyzes the transfer of sulfur to the sulfur carrier protein ThiS, forming ThiS-thiocarboxylate. This is a step in the synthesis of thiazole, in the thiamine biosynthesis pathway. The sulfur is donated as persulfide by IscS. The polypeptide is tRNA sulfurtransferase (Saccharophagus degradans (strain 2-40 / ATCC 43961 / DSM 17024)).